Consider the following 382-residue polypeptide: MTAPLNHSAPITVEVALGDRGYDIVIGRDVLRSLGTRIAALRPGARTAIVTDRNVATCWLAQTQAALDDVGIVSMPIVVEGGEGSKSYAGLQQVCEALIAAKIERNDLVIALGGGVVGDLAGFAASIVRRGLDFVQVPTSLLAQVDSSVGGKTGINSPHGKNLVGAFHQPVLVIADTAVLDTLSPRQFRAGYAEVAKYGALGDEAFFAWLEANHAEIVRGGSAREHAIATSCRAKAAIVARDERETGERALLNLGHTFGHALEAATGFSERLFHGEGVAVGMVLAAQFSAERGMLSNDAAARLSHHLAEVGLPTRLQDIAGFAQEGLADADALMALMAQDKKVKRGRLTFILLEAIGRAVIAHDVEPEPVRDFLARKLADKT.

Residues 115–119 (GVVGD), 139–140 (TS), lysine 152, and lysine 161 each bind NAD(+). Glutamate 194, histidine 256, and histidine 274 together coordinate Zn(2+).

Belongs to the sugar phosphate cyclases superfamily. Dehydroquinate synthase family. The cofactor is Co(2+). Zn(2+) is required as a cofactor. It depends on NAD(+) as a cofactor.

Its subcellular location is the cytoplasm. It carries out the reaction 7-phospho-2-dehydro-3-deoxy-D-arabino-heptonate = 3-dehydroquinate + phosphate. It functions in the pathway metabolic intermediate biosynthesis; chorismate biosynthesis; chorismate from D-erythrose 4-phosphate and phosphoenolpyruvate: step 2/7. In terms of biological role, catalyzes the conversion of 3-deoxy-D-arabino-heptulosonate 7-phosphate (DAHP) to dehydroquinate (DHQ). The chain is 3-dehydroquinate synthase from Rhodopseudomonas palustris (strain BisB18).